The sequence spans 296 residues: Giardin subunit alpha-3 (296 aa).

4 Annexin repeats span residues 3–72 (DTVT…SNCW), 74–146 (ELPV…TWIK), 153–222 (NNIN…TAHY), and 226–295 (GMNN…VLWR).

This sequence belongs to the annexin family. Giardin subunit alpha subfamily.

It localises to the cytoplasm. It is found in the cytoskeleton. Functionally, giardins are involved in parasite attachment to the intestinal mucosa and in the cytoskeletal disassembly and reassembly that marks the transition from infectious trophozoite to transmissible cyst. They may interact with other cytoskeletal proteins such as microtubules in the microribbons or crossbridges, to maintain the integrity of the ventral disk. The protein is Giardin subunit alpha-3 of Giardia intestinalis (Giardia lamblia).